Consider the following 555-residue polypeptide: Myo-inositol transporter 2 (555 aa).

Residues 1–61 (MSSTLDTITP…NLVRAENEDK (61 aa)) are Cytoplasmic-facing. A helical membrane pass occupies residues 62–82 (VTPYFMFLISVAAIAGFLFGY). The Extracellular portion of the chain corresponds to 83-108 (DTGIVGAALPMVGTSLGHTLSATESE). Residues 109–129 (IITAGTTIGAIFGASILGTMA) form a helical membrane-spanning segment. Topologically, residues 130–142 (DKLGRKWAMIISD) are cytoplasmic. A helical transmembrane segment spans residues 143-163 (FAFTAGAIIIAASYSVPQIIV). Topologically, residues 164–165 (GR) are extracellular. The helical transmembrane segment at 166-186 (LVLGVGVGGAAVIAPLYIAEL) threads the bilayer. The Cytoplasmic segment spans residues 187–200 (APTAVRGRCVGANA). Residues 201-221 (FCIPFGQVVASAIGAGFQAGV) traverse the membrane as a helical segment. Residues 222 to 228 (PYHIGWR) are Extracellular-facing. Residues 229–249 (VLFGLGVVPSVVQLCLMHFLP) traverse the membrane as a helical segment. Residues 250–328 (ESPRVLVLRG…AIISVSGVQA (79 aa)) are Cytoplasmic-facing. The helical transmembrane segment at 329 to 349 (FGQLTGFNTLLYYSGTIFGLL) threads the bilayer. The Extracellular portion of the chain corresponds to 350–355 (GLKNGA). A helical transmembrane segment spans residues 356–376 (AAGLIPSCLNALFVFIGMSIV). Topologically, residues 377 to 385 (DKVGRRKLM) are cytoplasmic. Residues 386–406 (ITFIPGMMIAFTWTIISFHFL) form a helical membrane-spanning segment. The Extracellular segment spans residues 407 to 427 (TKPTGGLLLKDYQYSTPLVGS). A helical membrane pass occupies residues 428 to 448 (VLGSIVLFVIPFGLTYSHIIW). Residues 449–461 (YQSEFLPLEIRAA) lie on the Cytoplasmic side of the membrane. A helical membrane pass occupies residues 462–482 (GSAISTTACWLANLVVSVAYL). Topologically, residues 483 to 487 (TQLEK) are extracellular. Residues 488 to 508 (LGATGTYGLYLGFITIGYIFV) form a helical membrane-spanning segment. Topologically, residues 509–555 (YFCYPETKGLSIDETAEIFIDGFGIEKAHQMLREKRAFAAELYAGRA) are cytoplasmic.

Belongs to the major facilitator superfamily. Sugar transporter (TC 2.A.1.1) family.

It is found in the cell membrane. The catalysed reaction is myo-inositol(out) + H(+)(out) = myo-inositol(in) + H(+)(in). Its function is as follows. Transporter for myo-inositol. This chain is Myo-inositol transporter 2, found in Cryptococcus neoformans var. grubii serotype A (strain H99 / ATCC 208821 / CBS 10515 / FGSC 9487) (Filobasidiella neoformans var. grubii).